Here is a 600-residue protein sequence, read N- to C-terminus: MENSSAASASSEAGSSRSQEIEELERFIDSYVLEYQVQGLLTDKTEGDGESQRTQSHISQWTADCREQLDGSCSFSRGRAPPQQNGNKDNSLDMLGTDIWAANTFDSFSGATWDLQPEKLDFTQFHRKVRHTPKQPLPHIDREGCGKGKLEDGDGISLNDIEKVLPTWQGYHPMPHEAEIAHTKKLFRRRRNDRRRQQRPPGGNKPQQHGDHQPGSAKHNRDHQKSYQGGSGPHPSGRPTHHGYSQNRRWHHGNMKHPPGDKGEAGSHRNAKETVTVENPKLEDGPGDTGHSGLEPPCSPDTLTPAASERPTPQLPGGPEAEIKHKDTVLPERLRERPKITLLQSSKDRLRRRLKEKDRDEVAVETSSPQPSKMDRLMEILNIMRNNSSDVDAKLTSFMEEAQNSTNSEEMLGEIVRTIYQKAVSDRSFAFTAAKLCDKMALFMVEGTKFRSLLLNMLQKDFTVREELQQQDVERWLGFITFLCEVFGTMRSSTGEPFRVLVCPIYTCLRELLQSQDVKEDAVLCCSMELQSTGRLLEEQLPEMMTELLASARDKMLCPSESMLTRSLLLEVIELHANSWNPLTPPITQYYNRTIQKLTA.

At M1 the chain carries N-acetylmethionine. Positions 1-18 are enriched in low complexity; it reads MENSSAASASSEAGSSRS. 4 disordered regions span residues 1–20, 43–62, 134–154, and 175–370; these read MENS…RSQE, DKTE…SQWT, KQPL…EDGD, and PHEA…SSPQ. An interaction with NCBP1/CBP80 region spans residues 1–305; it reads MENSSAASAS…PPCSPDTLTP (305 aa). S18 is modified (phosphoserine). Polar residues predominate over residues 52 to 62; the sequence is QRTQSHISQWT. Residues 139-152 show a composition bias toward basic and acidic residues; it reads HIDREGCGKGKLED. The span at 183 to 198 shows a compositional bias: basic residues; that stretch reads TKKLFRRRRNDRRRQQ. Positions 258–272 are enriched in basic and acidic residues; sequence PPGDKGEAGSHRNAK. T289 bears the Phosphothreonine mark. S299 is subject to Phosphoserine. Residues 321–339 show a composition bias toward basic and acidic residues; that stretch reads AEIKHKDTVLPERLRERPK. The MIF4G domain occupies 378 to 579; sequence MEILNIMRNN…LEVIELHANS (202 aa).

The protein belongs to the CTIF family. Interacts with NCBP1/CBP80; the interaction is direct. Associates with the eukaryotic translation initiation factor 3 (eIF-3) complex. As to expression, widely expressed.

It localises to the cytoplasm. The protein resides in the perinuclear region. Its function is as follows. Specifically required for the pioneer round of mRNA translation mediated by the cap-binding complex (CBC), that takes place during or right after mRNA export via the nuclear pore complex (NPC). Acts via its interaction with the NCBP1/CBP80 component of the CBC complex and recruits the 40S small subunit of the ribosome via eIF3. In contrast, it is not involved in steady state translation, that takes place when the CBC complex is replaced by cytoplasmic cap-binding protein eIF4E. Also required for nonsense-mediated mRNA decay (NMD), the pioneer round of mRNA translation mediated by the cap-binding complex playing a central role in nonsense-mediated mRNA decay (NMD). This Mus musculus (Mouse) protein is CBP80/20-dependent translation initiation factor (Ctif).